The primary structure comprises 236 residues: Three prime repair exonuclease 2 (236 aa).

The Mg(2+) site is built by Asp14 and Glu16. Residues 16-17 and Tyr122 each bind substrate; that span reads EA. The active-site Proton donor/acceptor is His188. Asp193 provides a ligand contact to Mg(2+). Asp193 provides a ligand contact to substrate.

Belongs to the exonuclease superfamily. TREX family. As to quaternary structure, homodimer. Requires Mg(2+) as cofactor.

It is found in the nucleus. The catalysed reaction is Exonucleolytic cleavage in the 3'- to 5'-direction to yield nucleoside 5'-phosphates.. Functionally, exonuclease with a preference for double-stranded DNA with mismatched 3' termini. May play a role in DNA repair. The polypeptide is Three prime repair exonuclease 2 (Trex2) (Mus musculus (Mouse)).